The chain runs to 391 residues: Acetyl-CoA acetyltransferase (391 aa).

C88 serves as the catalytic Acyl-thioester intermediate. Catalysis depends on proton acceptor residues H347 and C377.

The protein belongs to the thiolase-like superfamily. Thiolase family. As to quaternary structure, homotetramer.

The protein localises to the cytoplasm. It carries out the reaction 2 acetyl-CoA = acetoacetyl-CoA + CoA. Its pathway is metabolic intermediate biosynthesis; (R)-mevalonate biosynthesis; (R)-mevalonate from acetyl-CoA: step 1/3. This chain is Acetyl-CoA acetyltransferase (phaA), found in Paracoccus denitrificans.